Reading from the N-terminus, the 200-residue chain is Cytochrome c biogenesis ATP-binding export protein CcmA (200 aa).

The region spanning 1–199 (MRLTGRGLRC…AARELRIGGA (199 aa)) is the ABC transporter domain. 35 to 42 (GANGAGKT) is an ATP binding site.

This sequence belongs to the ABC transporter superfamily. CcmA exporter (TC 3.A.1.107) family. As to quaternary structure, the complex is composed of two ATP-binding proteins (CcmA) and two transmembrane proteins (CcmB).

The protein localises to the cell inner membrane. The catalysed reaction is heme b(in) + ATP + H2O = heme b(out) + ADP + phosphate + H(+). Functionally, part of the ABC transporter complex CcmAB involved in the biogenesis of c-type cytochromes; once thought to export heme, this seems not to be the case, but its exact role is uncertain. Responsible for energy coupling to the transport system. In Rhodopseudomonas palustris (strain BisB18), this protein is Cytochrome c biogenesis ATP-binding export protein CcmA.